Consider the following 166-residue polypeptide: Large ribosomal subunit protein bL19 (166 aa).

The protein belongs to the bacterial ribosomal protein bL19 family.

In terms of biological role, this protein is located at the 30S-50S ribosomal subunit interface and may play a role in the structure and function of the aminoacyl-tRNA binding site. This is Large ribosomal subunit protein bL19 from Chelativorans sp. (strain BNC1).